The following is a 973-amino-acid chain: Valine--tRNA ligase (973 aa).

The 'HIGH' region signature appears at Pro57 to His67. The 'KMSKS' region signature appears at Lys569–Ser573. Lys572 provides a ligand contact to ATP. Positions Met901 to Ile970 form a coiled coil.

The protein belongs to the class-I aminoacyl-tRNA synthetase family. ValS type 1 subfamily. Monomer.

It localises to the cytoplasm. The catalysed reaction is tRNA(Val) + L-valine + ATP = L-valyl-tRNA(Val) + AMP + diphosphate. Functionally, catalyzes the attachment of valine to tRNA(Val). As ValRS can inadvertently accommodate and process structurally similar amino acids such as threonine, to avoid such errors, it has a 'posttransfer' editing activity that hydrolyzes mischarged Thr-tRNA(Val) in a tRNA-dependent manner. This Colwellia psychrerythraea (strain 34H / ATCC BAA-681) (Vibrio psychroerythus) protein is Valine--tRNA ligase.